A 469-amino-acid chain; its full sequence is A-type ATP synthase subunit B (469 aa).

This sequence belongs to the ATPase alpha/beta chains family. Has multiple subunits with at least A(3), B(3), C, D, E, F, H, I and proteolipid K(x).

Its subcellular location is the cell membrane. Component of the A-type ATP synthase that produces ATP from ADP in the presence of a proton gradient across the membrane. The B chain is a regulatory subunit. The polypeptide is A-type ATP synthase subunit B (Staphylothermus marinus (strain ATCC 43588 / DSM 3639 / JCM 9404 / F1)).